The following is a 600-amino-acid chain: Glutamine--fructose-6-phosphate aminotransferase [isomerizing] (600 aa).

Catalysis depends on Cys2, which acts as the Nucleophile; for GATase activity. The Glutamine amidotransferase type-2 domain maps to 2–217 (CGIVGFIGEQ…DKEIVIVTKE (216 aa)). SIS domains lie at 283–422 (IRNA…AKGE) and 452–590 (LAKQ…VDKP). Lys595 acts as the For Fru-6P isomerization activity in catalysis.

Homodimer.

Its subcellular location is the cytoplasm. It catalyses the reaction D-fructose 6-phosphate + L-glutamine = D-glucosamine 6-phosphate + L-glutamate. Its function is as follows. Catalyzes the first step in hexosamine metabolism, converting fructose-6P into glucosamine-6P using glutamine as a nitrogen source. In Bacillus cereus (strain ATCC 14579 / DSM 31 / CCUG 7414 / JCM 2152 / NBRC 15305 / NCIMB 9373 / NCTC 2599 / NRRL B-3711), this protein is Glutamine--fructose-6-phosphate aminotransferase [isomerizing].